The sequence spans 544 residues: NADP-dependent malic enzyme (544 aa).

A disordered region spans residues 1-22 (MQNKPSFILRNPSANKGTGFNN). Positions 12-21 (PSANKGTGFN) are enriched in polar residues. The active-site Proton donor is the Y92. Position 145 (R145) interacts with NAD(+). The active-site Proton acceptor is the K163. A divalent metal cation contacts are provided by E234, D235, and D258. D258 is an NAD(+) binding site. 287-303 (VFLGAGSAGIGVADCIM) lines the NADP(+) pocket. Residue N400 coordinates NAD(+).

It belongs to the malic enzymes family. Homotetramer. It depends on Mg(2+) as a cofactor. Mn(2+) is required as a cofactor. Expressed in the fruiting body.

It is found in the cytoplasm. The catalysed reaction is (S)-malate + NADP(+) = pyruvate + CO2 + NADPH. It catalyses the reaction oxaloacetate + H(+) = pyruvate + CO2. The chain is NADP-dependent malic enzyme (malA) from Dictyostelium discoideum (Social amoeba).